A 364-amino-acid chain; its full sequence is GDP-fucose transporter 1 (364 aa).

8 helical membrane-spanning segments follow: residues phenylalanine 34 to valine 56, valine 76 to cysteine 98, leucine 111 to phenylalanine 130, valine 140 to leucine 162, serine 167 to valine 185, serine 195 to isoleucine 214, isoleucine 227 to leucine 249, and alanine 264 to leucine 286. A disordered region spans residues methionine 345–valine 364.

It belongs to the TPT transporter family. SLC35C subfamily.

The protein localises to the golgi apparatus membrane. The catalysed reaction is GMP(out) + GDP-beta-L-fucose(in) = GMP(in) + GDP-beta-L-fucose(out). Antiporter specific for GDP-l-fucose and depending on the concomitant reverse transport of GMP. Involved in GDP-fucose import from the cytoplasm into the Golgi lumen. This Bos taurus (Bovine) protein is GDP-fucose transporter 1 (SLC35C1).